The chain runs to 128 residues: Calcitonin gene-related peptide 1 (128 aa).

The N-terminal stretch at 1-25 (MGFLKFSPFLVVSILLLYQACSLQA) is a signal peptide. A propeptide spanning residues 26–80 (VPLRSILESSPGMATLSEEEVRLLAALVQDYMQMKARELEQEEEQEAEGSSVTAQ) is cleaved from the precursor. Cys84 and Cys89 are disulfide-bonded. Residue Phe119 is modified to Phenylalanine amide. A propeptide spanning residues 125-128 (DLQA) is cleaved from the precursor.

It belongs to the calcitonin family. Detected in nerve cells of cerebrum, hippocampus and pons/midbrain in newborns, and only in nerve cells of pons/midbrain in adult.

It localises to the secreted. Its function is as follows. CGRP1/CALCA is a peptide hormone that induces vasodilation mediated by the CALCRL-RAMP1 receptor complex. Dilates a variety of vessels including the coronary, cerebral and systemic vasculature. Its abundance in the CNS also points toward a neurotransmitter or neuromodulator role. It also elevates platelet cAMP. CGRP1 can also bind and activate CALCR-RAMP1 (AMYR1) receptor complex. In Mus musculus (Mouse), this protein is Calcitonin gene-related peptide 1.